We begin with the raw amino-acid sequence, 192 residues long: Imidazoleglycerol-phosphate dehydratase (192 aa).

This sequence belongs to the imidazoleglycerol-phosphate dehydratase family.

The protein localises to the cytoplasm. The enzyme catalyses D-erythro-1-(imidazol-4-yl)glycerol 3-phosphate = 3-(imidazol-4-yl)-2-oxopropyl phosphate + H2O. It participates in amino-acid biosynthesis; L-histidine biosynthesis; L-histidine from 5-phospho-alpha-D-ribose 1-diphosphate: step 6/9. This chain is Imidazoleglycerol-phosphate dehydratase, found in Staphylococcus aureus (strain JH9).